The chain runs to 292 residues: MAFMKKYLLPILGLFMAYYYYSANEEFRPEMLQGKKVIVTGASKGIGREMAYHLAKMGAHVVVTARSKETLQKVVSHCLELGAASAHYIAGTMEDMTFAEQFVAQAGKLMGGLDMLILNHITNTSLNLFHDDIHHVRKSMEVNFLSYVVLTVAALPMLKQSNGSIVVVSSLAGKVAYPMVAAYSASKFALDGFFSSIRKEYSVSRVNVSITLCVLGLIDTETAMKAVSGIVHMQAAPKEECALEIIKGGALRQEEVYYDSSLWTTLLIRNPCRKILEFLYSTSYNMDRFINK.

Over 1–7 the chain is Cytoplasmic; the sequence is MAFMKKY. A helical; Signal-anchor for type II membrane protein membrane pass occupies residues 8-24; it reads LLPILGLFMAYYYYSAN. The Lumenal segment spans residues 25–292; that stretch reads EEFRPEMLQG…SYNMDRFINK (268 aa). NADP(+) is bound by residues 41-67, 92-93, and 119-121; these read GASK…TARS, TM, and NHI. N-linked (GlcNAc...) asparagine glycosylation is found at Asn123 and Asn162. Residue Ser170 coordinates substrate. Tyr183 serves as the catalytic Proton acceptor. NADP(+) is bound at residue 183-187; sequence YSASK. Residue Asn207 is glycosylated (N-linked (GlcNAc...) asparagine). Residue 218–222 coordinates NADP(+); it reads IDTET.

This sequence belongs to the short-chain dehydrogenases/reductases (SDR) family. As to quaternary structure, homodimer. Glycosylated. Widely expressed, highest expression in liver, lower in testis, ovary, lung, foreskin fibroblasts, and much lower in kidney. Expressed in liver (at protein level). Expressed in the basal cells of the corneal epithelium and in the ciliary nonpigmented epithelium (both at mRNA and at protein level).

Its subcellular location is the endoplasmic reticulum membrane. The catalysed reaction is an 11beta-hydroxysteroid + NADP(+) = an 11-oxosteroid + NADPH + H(+). It carries out the reaction cortisone + NADPH + H(+) = cortisol + NADP(+). It catalyses the reaction corticosterone + NADP(+) = 11-dehydrocorticosterone + NADPH + H(+). The enzyme catalyses a 7beta-hydroxysteroid + NADP(+) = a 7-oxosteroid + NADPH + H(+). The catalysed reaction is 7-oxocholesterol + NADPH + H(+) = 7beta-hydroxycholesterol + NADP(+). It carries out the reaction chenodeoxycholate + NADP(+) = 7-oxolithocholate + NADPH + H(+). It catalyses the reaction 7-oxolithocholate + NADPH + H(+) = ursodeoxycholate + NADP(+). The enzyme catalyses glycochenodeoxycholate + NADP(+) = 7-oxoglycolithocholate + NADPH + H(+). The catalysed reaction is taurochenodeoxycholate + NADP(+) = 7-oxotaurolithocholate + NADPH + H(+). It carries out the reaction tauroursodeoxycholate + NADP(+) = 7-oxotaurolithocholate + NADPH + H(+). It catalyses the reaction glycoursodeoxycholate + NADP(+) = 7-oxoglycolithocholate + NADPH + H(+). The enzyme catalyses 7-oxopregnenolone + NADPH + H(+) = 7beta-hydroxypregnenolone + NADP(+). The catalysed reaction is 3beta,7alpha-dihydroxyandrost-5-en-17-one + NADP(+) = 3beta-hydroxy-5-androstene-7,17-dione + NADPH + H(+). It carries out the reaction 3beta-hydroxy-5-androstene-7,17-dione + NADPH + H(+) = 3beta,7beta-dihydroxyandrost-5-en-17-one + NADP(+). It catalyses the reaction 3beta-hydroxy-5alpha-androstane-7,17-dione + NADPH + H(+) = 3beta,7beta-dihydroxy-5alpha-androstan-17-one + NADP(+). Its pathway is steroid metabolism. Hexose-6-phosphate dehydrogenase (H6PD) provides cosubstrate NADPH, and the glucose-6-phosphate transporter in the ER-membrane supplies the substrate for H6PDH, their activities stimulate the reduction of cortisone and abolish the oxidation of cortisol. Its function is as follows. Controls the reversible conversion of biologically active glucocorticoids such as cortisone to cortisol, and 11-dehydrocorticosterone to corticosterone in the presence of NADP(H). Participates in the corticosteroid receptor-mediated anti-inflammatory response, as well as metabolic and homeostatic processes. Plays a role in the secretion of aqueous humor in the eye, maintaining a normotensive, intraocular environment. Bidirectional in vitro, predominantly functions as a reductase in vivo, thereby increasing the concentration of active glucocorticoids. It has broad substrate specificity, besides glucocorticoids, it accepts other steroid and sterol substrates. Interconverts 7-oxo- and 7-hydroxy-neurosteroids such as 7-oxopregnenolone and 7beta-hydroxypregnenolone, 7-oxodehydroepiandrosterone (3beta-hydroxy-5-androstene-7,17-dione) and 7beta-hydroxydehydroepiandrosterone (3beta,7beta-dihydroxyandrost-5-en-17-one), among others. Catalyzes the stereo-specific conversion of the major dietary oxysterol, 7-ketocholesterol (7-oxocholesterol), into the more polar 7-beta-hydroxycholesterol metabolite. 7-oxocholesterol is one of the most important oxysterols, it participates in several events such as induction of apoptosis, accumulation in atherosclerotic lesions, lipid peroxidation, and induction of foam cell formation. Mediates the 7-oxo reduction of 7-oxolithocholate mainly to chenodeoxycholate, and to a lesser extent to ursodeoxycholate, both in its free form and when conjugated to glycine or taurine, providing a link between glucocorticoid activation and bile acid metabolism. Catalyzes the synthesis of 7-beta-25-dihydroxycholesterol from 7-oxo-25-hydroxycholesterol in vitro, which acts as a ligand for the G-protein-coupled receptor (GPCR) Epstein-Barr virus-induced gene 2 (EBI2) and may thereby regulate immune cell migration. This Homo sapiens (Human) protein is 11-beta-hydroxysteroid dehydrogenase 1.